Reading from the N-terminus, the 538-residue chain is Lipid scramblase CLPTM1L (538 aa).

The Cytoplasmic segment spans residues 1 to 10; sequence MWSGRSSFTS. Residues 11-31 traverse the membrane as a helical segment; sequence LVVGVFVVYVVHTCWVMYGIV. Residues 32–284 lie on the Extracellular side of the membrane; the sequence is YTRPCSGHGR…VKGIFVDTNL (253 aa). N-linked (GlcNAc...) asparagine glycans are attached at residues N91 and N101. Residues 285 to 305 form a helical membrane-spanning segment; that stretch reads YFLALTFFVAAFHLLFDFLAF. Over 306-324 the chain is Cytoplasmic; it reads KNDISFWKKKKSMIGMSTK. Residues 325–341 traverse the membrane as a helical segment; sequence AVLWRCFSTVVIFLFLL. The Extracellular portion of the chain corresponds to 342–402; the sequence is DEQTSLPVLV…TEEYDAQAMK (61 aa). Residues 403-423 form a helical membrane-spanning segment; the sequence is YLSYLLYPLCIGGAIYSLLNI. Over 424–428 the chain is Cytoplasmic; it reads KYKSW. Residues 429 to 449 form a helical membrane-spanning segment; it reads YSWLINSFVNGVYAFGFLFML. The Extracellular segment spans residues 450 to 538; sequence PQLFVNYKMK…DTPQRKPHTD (89 aa).

Belongs to the CLPTM1 family.

Its subcellular location is the endoplasmic reticulum membrane. It catalyses the reaction a 6-(alpha-D-glucosaminyl)-1-(1,2-diacyl-sn-glycero-3-phospho)-1D-myo-inositol(in) = a 6-(alpha-D-glucosaminyl)-1-(1,2-diacyl-sn-glycero-3-phospho)-1D-myo-inositol(out). It carries out the reaction 6-(alpha-D-glucosaminyl)-(1-octadecanoyl,2-(9Z)-octadecenoyl-sn-glycero-3-phospho)-1D-myo-inositol(in) = 6-(alpha-D-glucosaminyl)-(1-octadecanoyl,2-(9Z)-octadecenoyl-sn-glycero-3-phospho)-1D-myo-inositol(out). The catalysed reaction is a 1,2-diacyl-sn-glycero-3-phospho-(1D-myo-inositol)(in) = a 1,2-diacyl-sn-glycero-3-phospho-(1D-myo-inositol)(out). The enzyme catalyses a 1,2-diacyl-sn-glycero-3-phosphocholine(in) = a 1,2-diacyl-sn-glycero-3-phosphocholine(out). It catalyses the reaction a 1,2-diacyl-sn-glycero-3-phosphoethanolamine(in) = a 1,2-diacyl-sn-glycero-3-phosphoethanolamine(out). Scramblase that mediates the translocation of glucosaminylphosphatidylinositol (alpha-D-GlcN-(1-6)-(1,2-diacyl-sn-glycero-3-phospho)-1D-myo-inositol, GlcN-PI) across the endoplasmic reticulum (ER) membrane, from the cytosolic leaflet to the luminal leaflet of the ER membrane, where it participates in the biosynthesis of glycosylphosphatidylinositol (GPI). GPI is a lipid glycoconjugate involved in post-translational modification of proteins. Can also translocate 1,2-diacyl-sn-glycero-3-phospho-(1D-myo-inositol) (phosphatidylinositol or PI), as well as several other phospholipids (1,2-diacyl-sn-glycero-3-phosphocholine, 1,2-diacyl-sn-glycero-3-phosphoethanolamine), and N-acetylglucosaminylphosphatidylinositol (GlcNAc-PI) in vitro. The chain is Lipid scramblase CLPTM1L (CLPTM1L) from Bos taurus (Bovine).